Reading from the N-terminus, the 202-residue chain is LexA repressor (202 aa).

A DNA-binding region (H-T-H motif) is located at residues 29–49; that stretch reads VREICTAVGLKSTSTVHSYLE. Residues Ser-125 and Lys-162 each act as for autocatalytic cleavage activity in the active site.

The protein belongs to the peptidase S24 family. Homodimer.

The catalysed reaction is Hydrolysis of Ala-|-Gly bond in repressor LexA.. Its function is as follows. Represses a number of genes involved in the response to DNA damage (SOS response), including recA and lexA. In the presence of single-stranded DNA, RecA interacts with LexA causing an autocatalytic cleavage which disrupts the DNA-binding part of LexA, leading to derepression of the SOS regulon and eventually DNA repair. This is LexA repressor from Clostridium kluyveri (strain NBRC 12016).